Reading from the N-terminus, the 438-residue chain is Anaerobic glycerol-3-phosphate dehydrogenase subunit B (438 aa).

The protein belongs to the anaerobic G-3-P dehydrogenase subunit B family. In terms of assembly, composed of a catalytic GlpA/B dimer and of membrane bound GlpC. It depends on FMN as a cofactor.

It carries out the reaction a quinone + sn-glycerol 3-phosphate = dihydroxyacetone phosphate + a quinol. Its pathway is polyol metabolism; glycerol degradation via glycerol kinase pathway; glycerone phosphate from sn-glycerol 3-phosphate (anaerobic route): step 1/1. In terms of biological role, conversion of glycerol 3-phosphate to dihydroxyacetone. Uses fumarate or nitrate as electron acceptor. In Vibrio vulnificus (strain YJ016), this protein is Anaerobic glycerol-3-phosphate dehydrogenase subunit B.